A 145-amino-acid polypeptide reads, in one-letter code: Superoxide dismutase [Mn/Fe] (145 aa).

Fe(3+)-binding residues include His-10 and His-64. His-10 and His-64 together coordinate Mn(2+).

Belongs to the iron/manganese superoxide dismutase family. Mn(2+) is required as a cofactor. Requires Fe(3+) as cofactor.

It carries out the reaction 2 superoxide + 2 H(+) = H2O2 + O2. In terms of biological role, destroys superoxide anion radicals which are normally produced within the cells and which are toxic to biological systems. Catalyzes the dismutation of superoxide anion radicals into O2 and H2O2 by successive reduction and oxidation of the transition metal ion at the active site. This chain is Superoxide dismutase [Mn/Fe] (sodA), found in Streptococcus acidominimus.